The following is a 188-amino-acid chain: MWLIVGLGNPGERYARTRHNIGFRSVETLAERHGLTFRNQRAKSEIAEGIIRGQRVALVKPQTYMNLSGQAVAALRQWYKIDPARELLVIYDDLDLPFAKLRLRERGSAGTHNGMRSIVGQLGTTEFPRLRIGIGQPPGQMDAADYVLSRFTPEEEAVLPEVLARVADAVEVVVSEGLTAAMNRYNPL.

A tRNA-binding site is contributed by Tyr14. Catalysis depends on His19, which acts as the Proton acceptor. Residues Tyr64, Asn66, and Asn113 each coordinate tRNA.

The protein belongs to the PTH family. Monomer.

Its subcellular location is the cytoplasm. The catalysed reaction is an N-acyl-L-alpha-aminoacyl-tRNA + H2O = an N-acyl-L-amino acid + a tRNA + H(+). Hydrolyzes ribosome-free peptidyl-tRNAs (with 1 or more amino acids incorporated), which drop off the ribosome during protein synthesis, or as a result of ribosome stalling. Functionally, catalyzes the release of premature peptidyl moieties from peptidyl-tRNA molecules trapped in stalled 50S ribosomal subunits, and thus maintains levels of free tRNAs and 50S ribosomes. The polypeptide is Peptidyl-tRNA hydrolase (Chloroflexus aggregans (strain MD-66 / DSM 9485)).